The primary structure comprises 821 residues: Bifunctional dethiobiotin synthetase/7,8-diamino-pelargonic acid aminotransferase, mitochondrial (821 aa).

The segment at 28–283 (SPAFAVFGAN…VHVLPPIPED (256 aa)) is dethiobiotin synthetase. Position 39–44 (39–44 (GVGKTL)) interacts with ATP. Thr43 contacts Mg(2+). Thr72 serves as a coordination point for substrate. Glu194 contributes to the Mg(2+) binding site. Residue 194–197 (ETAG) participates in ATP binding. Residues 316-820 (RLNSMQRKSK…AKVHRRLQKL (505 aa)) form a 7,8-diamino-pelargonic acid aminotransferase region. Position 374-375 (374-375 (WW)) interacts with (8S)-8-amino-7-oxononanoate. 436–437 (GS) serves as a coordination point for pyridoxal 5'-phosphate. (8S)-8-amino-7-oxononanoate is bound at residue Tyr482. Residue Asp626 coordinates pyridoxal 5'-phosphate. Residues Lys655 and Gly689 each coordinate (8S)-8-amino-7-oxononanoate. Lys655 bears the N6-(pyridoxal phosphate)lysine mark. Residue Ser691 coordinates pyridoxal 5'-phosphate. Arg787 serves as a coordination point for (8S)-8-amino-7-oxononanoate.

The protein in the N-terminal section; belongs to the dethiobiotin synthetase family. This sequence in the C-terminal section; belongs to the class-III pyridoxal-phosphate-dependent aminotransferase family. BioA subfamily. It depends on Mg(2+) as a cofactor. The cofactor is pyridoxal 5'-phosphate.

Its subcellular location is the mitochondrion. It carries out the reaction (7R,8S)-7,8-diammoniononanoate + CO2 + ATP = (4R,5S)-dethiobiotin + ADP + phosphate + 3 H(+). The enzyme catalyses (8S)-8-amino-7-oxononanoate + S-adenosyl-L-methionine = S-adenosyl-4-methylsulfanyl-2-oxobutanoate + (7R,8S)-7,8-diammoniononanoate. It participates in cofactor biosynthesis; biotin biosynthesis; biotin from 7,8-diaminononanoate: step 1/2. It functions in the pathway cofactor biosynthesis; biotin biosynthesis; 7,8-diaminononanoate from 8-amino-7-oxononanoate (SAM route): step 1/1. Functionally, bifunctional enzyme that catalyzes two different reactions involved in the biotin biosynthesis. Its function is as follows. Catalyzes a mechanistically unusual reaction, the ATP-dependent insertion of CO2 between the N7 and N8 nitrogen atoms of 7,8-diaminopelargonic acid (DAPA) to form an ureido ring. In terms of biological role, catalyzes the transfer of the alpha-amino group from S-adenosyl-L-methionine (SAM) to 7-keto-8-aminopelargonic acid (KAPA) to form 7,8-diaminopelargonic acid (DAPA). It is the only aminotransferase known to utilize SAM as an amino donor. The sequence is that of Bifunctional dethiobiotin synthetase/7,8-diamino-pelargonic acid aminotransferase, mitochondrial (BIO3-BIO1) from Oryza sativa subsp. japonica (Rice).